The chain runs to 764 residues: Transient receptor potential cation channel subfamily V member 2 (764 aa).

The disordered stretch occupies residues 1 to 46 (MTSPSSSPVFRLETLDGGQEDGSEADRGKLDFGSGLPPMESQFQGE). The interval 1–388 (MTSPSSSPVF…LLQAKWDLLI (388 aa)) is required for interaction with SLC50A1. Residues 1 to 390 (MTSPSSSPVF…QAKWDLLIPK (390 aa)) lie on the Cytoplasmic side of the membrane. The residue at position 6 (serine 6) is a Phosphoserine. 6 ANK repeats span residues 72-114 (NRFD…TEGS), 115-161 (TGKT…DDYY), 162-207 (RGHS…TCFY), 208-243 (FGELPLSLAACTKQWDVVSYLLENPHQPASLQATDS), 244-292 (QGNT…IRNL), and 293-319 (QDLTPLKLAAKEGKIEIFRHILQREFS). A helical membrane pass occupies residues 391–411 (FFLNFLCNLIYMFIFTAVAYH). Residues 412-434 (QPTLKKQAAPHLKAEVGNSMLLT) lie on the Extracellular side of the membrane. The helical transmembrane segment at 435–455 (GHILILLGGIYLLVGQLWYFW) threads the bilayer. At 456–471 (RRHVFIWISFIDSYFE) the chain is on the cytoplasmic side. A helical membrane pass occupies residues 472–492 (ILFLFQALLTVVSQVLCFLAI). Residue glutamate 493 is a topological domain, extracellular. The chain crosses the membrane as a helical span at residues 494-514 (WYLPLLVSALVLGWLNLLYYT). Residues 515–537 (RGFQHTGIYSVMIQKVILRDLLR) are Cytoplasmic-facing. Residues 538–558 (FLLIYLVFLFGFAVALVSLSQ) traverse the membrane as a helical segment. The disordered stretch occupies residues 562–585 (RPEAPTGPNATESVQPMEGQEDEG). N-linked (GlcNAc...) asparagine glycosylation is present at asparagine 570. An intramembrane region (pore-forming) is located at residues 572-609 (TESVQPMEGQEDEGNGAQYRGILEASLELFKFTIGMGE). The helical transmembrane segment at 622–642 (VLLLLLAYVLLTYILLLNMLI) threads the bilayer. Residues 643-764 (ALMSETVNSV…YVPVQLLQSN (122 aa)) lie on the Cytoplasmic side of the membrane. The tract at residues 725–756 (PSGAGVPRTLENPVLASPPKEDEDGASEENYV) is disordered. A phosphoserine mark is found at serine 751 and serine 763.

The protein belongs to the transient receptor (TC 1.A.4) family. TrpV subfamily. TRPV2 sub-subfamily. Homotetramer. Interacts with a cAMP-dependent protein kinase type II regulatory subunit (PRKAR2A or PRKAR2B) and ACBD3. Interacts with SLC50A1; the interaction probably occurs intracellularly and depends on TRPV2 N-glycosylation. N-glycosylated. In terms of processing, phosphorylated by PKA.

Its subcellular location is the cell membrane. The protein localises to the cytoplasm. It localises to the melanosome. It catalyses the reaction Ca(2+)(in) = Ca(2+)(out). The catalysed reaction is Mg(2+)(in) = Mg(2+)(out). It carries out the reaction Na(+)(in) = Na(+)(out). The enzyme catalyses K(+)(in) = K(+)(out). Calcium-permeable, non-selective cation channel with an outward rectification. Seems to be regulated, at least in part, by IGF1, PDGF and neuropeptide head activator. May transduce physical stimuli in mast cells. Activated by temperatures higher than 52 degrees Celsius; is not activated by vanilloids and acidic pH. This chain is Transient receptor potential cation channel subfamily V member 2 (TRPV2), found in Homo sapiens (Human).